Reading from the N-terminus, the 479-residue chain is DNA polymerase IV (479 aa).

One can recognise a UmuC domain in the interval 7–189 (ILHLDMDAFF…MTVRTLPGVG (183 aa)). 2 residues coordinate Mg(2+): D11 and D105. The active site involves E106. 2 disordered regions span residues 357–400 (AGDR…GHGW) and 430–479 (DPEL…TSRP). The segment covering 381–396 (AERRWPSGHDVRHTEL) has biased composition (basic and acidic residues).

It belongs to the DNA polymerase type-Y family. In terms of assembly, monomer. Mg(2+) serves as cofactor.

The protein localises to the cytoplasm. It carries out the reaction DNA(n) + a 2'-deoxyribonucleoside 5'-triphosphate = DNA(n+1) + diphosphate. Poorly processive, error-prone DNA polymerase involved in untargeted mutagenesis. Copies undamaged DNA at stalled replication forks, which arise in vivo from mismatched or misaligned primer ends. These misaligned primers can be extended by PolIV. Exhibits no 3'-5' exonuclease (proofreading) activity. May be involved in translesional synthesis, in conjunction with the beta clamp from PolIII. This chain is DNA polymerase IV, found in Streptomyces coelicolor (strain ATCC BAA-471 / A3(2) / M145).